A 197-amino-acid chain; its full sequence is dTTP/UTP pyrophosphatase (197 aa).

The active-site Proton acceptor is the Asp-70.

Belongs to the Maf family. YhdE subfamily. A divalent metal cation serves as cofactor.

Its subcellular location is the cytoplasm. It catalyses the reaction dTTP + H2O = dTMP + diphosphate + H(+). The enzyme catalyses UTP + H2O = UMP + diphosphate + H(+). Nucleoside triphosphate pyrophosphatase that hydrolyzes dTTP and UTP. May have a dual role in cell division arrest and in preventing the incorporation of modified nucleotides into cellular nucleic acids. The sequence is that of dTTP/UTP pyrophosphatase (yceF) from Shigella dysenteriae serotype 1 (strain Sd197).